The sequence spans 169 residues: Myosin regulatory light chain 11 (169 aa).

Ala-2 is subject to N,N,N-trimethylalanine. Phosphoserine occurs at positions 15 and 16. 2 positions are modified to phosphothreonine: Thr-25 and Thr-35. The 36-residue stretch at 25 to 60 (TQIQEFKEAFTVIDQNRDGIIDKEDLRDTFAAMGRL) folds into the EF-hand 1 domain. Asp-38, Asn-40, Asp-42, and Asp-49 together coordinate Ca(2+). Phosphoserine is present on Ser-75. EF-hand domains are found at residues 95 to 130 (DPED…QCDR) and 131 to 166 (FSQE…GDAK). Residue Thr-101 is modified to Phosphothreonine.

In terms of assembly, myosin is a hexamer of 2 heavy chains and 4 light chains.

Functionally, myosin regulatory subunit that plays an essential role to maintain muscle integrity during early development. Plays a role in regulation of muscle contraction. This is Myosin regulatory light chain 11 (Myl11) from Mus musculus (Mouse).